We begin with the raw amino-acid sequence, 179 residues long: Transcription factor 21 (179 aa).

The interval 23–87 (IKLDPNKEFG…QVQRNAANAR (65 aa)) is disordered. Residues 34 to 46 (SNDSNEESSTCDN) show a composition bias toward polar residues. Residues 50–64 (KKGRGTSGKRRKAPS) show a composition bias toward basic residues. Residues 70–80 (GNINQEGKQVQ) show a composition bias toward polar residues. Positions 79 to 131 (VQRNAANARERARMRVLSKAFSRLKTTLPWVPPDTKLSKLDTLRLASSYIAHL) constitute a bHLH domain.

In terms of assembly, efficient DNA binding requires dimerization with another bHLH protein.

The protein localises to the nucleus. In terms of biological role, involved in epithelial-mesenchymal interactions in kidney and lung morphogenesis that include epithelial differentiation and branching morphogenesis. The protein is Transcription factor 21 (tcf21) of Xenopus tropicalis (Western clawed frog).